The sequence spans 300 residues: Small ribosomal subunit protein uS4m (300 aa).

The 64-residue stretch at 146-209 (KRVDMVLLRS…MKRKLLKRLK (64 aa)) folds into the S4 RNA-binding domain.

It belongs to the universal ribosomal protein uS4 family.

It is found in the mitochondrion. The chain is Small ribosomal subunit protein uS4m (mrps4) from Dictyostelium discoideum (Social amoeba).